Reading from the N-terminus, the 455-residue chain is uncharacterized protein (455 aa).

A signal peptide spans 1-24; it reads MKTTKILLHTGVLALSLLATQVMA.

This is an uncharacterized protein from Pseudomonas aeruginosa (strain ATCC 15692 / DSM 22644 / CIP 104116 / JCM 14847 / LMG 12228 / 1C / PRS 101 / PAO1).